A 58-amino-acid chain; its full sequence is Large ribosomal subunit protein uL30 (58 aa).

Belongs to the universal ribosomal protein uL30 family. In terms of assembly, part of the 50S ribosomal subunit.

The sequence is that of Large ribosomal subunit protein uL30 from Pelobacter propionicus (strain DSM 2379 / NBRC 103807 / OttBd1).